The primary structure comprises 524 residues: Cytochrome c nitrite reductase subunit NrfA (524 aa).

A signal peptide spans 1–24; that stretch reads MNNQKTFKGLRLAALGLVAVAAFT. Positions 29-39 are interaction with NrfH; sequence DVSTELKTPVY. Glycine 78, glutamate 117, and alanine 118 together coordinate Ca(2+). Heme is bound by residues histidine 121, cysteine 147, cysteine 150, lysine 151, cysteine 187, cysteine 190, and histidine 191. The segment at 221–222 is interaction with NrfH; that stretch reads RN. Residues cysteine 229, cysteine 232, and histidine 233 each coordinate heme. Glutamate 235, tyrosine 236, lysine 295, and glutamine 297 together coordinate Ca(2+). The heme site is built by histidine 309, cysteine 316, cysteine 319, histidine 320, histidine 335, cysteine 349, cysteine 352, histidine 353, and histidine 434. The segment at 318 to 331 is interaction with NrfH; that stretch reads DCHMSYTRSDDKKK. An interaction with NrfH region spans residues 351 to 355; the sequence is QCHSD.

This sequence belongs to the cytochrome c-552 family. Component of the NrfHA cytochrome c nitrite reductase complex composed of 4 NrfA catalytic subunits and 2 NrfH quinone-binding subunits. NrfA homodimer interacts with NrfH. It depends on Ca(2+) as a cofactor. Heme serves as cofactor.

It is found in the cell inner membrane. It carries out the reaction 6 Fe(III)-[cytochrome c] + NH4(+) + 2 H2O = 6 Fe(II)-[cytochrome c] + nitrite + 8 H(+). Its function is as follows. Catalytic subunit of the cytochrome c nitrite reductase holocomplex NrfHA. Has both nitrite and sulfite reductase activities. Catalyzes the reduction of nitrite to ammonia, consuming six electrons acquired by the electron donor subunit NrfH from the menaquinone pool, in an anaerobic respiratory process of nitrite. The other biological function of the NrfHA holocomplex is to detoxify nitrite. This function is essential for the survival of this organism as it enables it to overcome inhibition by nitrite, which is produced by other organisms living in the same environment. This chain is Cytochrome c nitrite reductase subunit NrfA, found in Nitratidesulfovibrio vulgaris (strain ATCC 29579 / DSM 644 / CCUG 34227 / NCIMB 8303 / VKM B-1760 / Hildenborough) (Desulfovibrio vulgaris).